A 154-amino-acid polypeptide reads, in one-letter code: MTHYEGDLRPTTARFVIIASRWNARITDALVTGARQSLAGNGIGEDAIDVVRVPGAWEIPMAANRVAQGGQHAAIIALGCVIRGDTRHYEHVADLCAEGLMSVQLQTGVPVLNGVLAVERVEDAEARAGGSHGNKGEECALAALELVNLMELLP.

Residues tryptophan 22, 56–58, and 80–82 contribute to the 5-amino-6-(D-ribitylamino)uracil site; these read AWE and CVI. A (2S)-2-hydroxy-3-oxobutyl phosphate-binding site is contributed by 85 to 86; it reads DT. The active-site Proton donor is the histidine 88. Residue asparagine 113 participates in 5-amino-6-(D-ribitylamino)uracil binding. Arginine 127 contacts (2S)-2-hydroxy-3-oxobutyl phosphate.

Belongs to the DMRL synthase family. As to quaternary structure, forms an icosahedral capsid composed of 60 subunits, arranged as a dodecamer of pentamers.

The catalysed reaction is (2S)-2-hydroxy-3-oxobutyl phosphate + 5-amino-6-(D-ribitylamino)uracil = 6,7-dimethyl-8-(1-D-ribityl)lumazine + phosphate + 2 H2O + H(+). The protein operates within cofactor biosynthesis; riboflavin biosynthesis; riboflavin from 2-hydroxy-3-oxobutyl phosphate and 5-amino-6-(D-ribitylamino)uracil: step 1/2. Its function is as follows. Catalyzes the formation of 6,7-dimethyl-8-ribityllumazine by condensation of 5-amino-6-(D-ribitylamino)uracil with 3,4-dihydroxy-2-butanone 4-phosphate. This is the penultimate step in the biosynthesis of riboflavin. The polypeptide is 6,7-dimethyl-8-ribityllumazine synthase (Xanthomonas campestris pv. campestris (strain 8004)).